Here is a 455-residue protein sequence, read N- to C-terminus: Squamosa promoter-binding-like protein 16 (455 aa).

The SBP-type zinc finger occupies 115 to 192 (CPSCAVDGCK…DGHNRRRRKP (78 aa)). Cys-118, Cys-123, Cys-140, His-143, Cys-159, Cys-162, His-166, and Cys-178 together coordinate Zn(2+). The Bipartite nuclear localization signal motif lies at 175–191 (KRSCRKRLDGHNRRRRK). The disordered stretch occupies residues 182–204 (LDGHNRRRRKPQPDPMNSASYLA).

Expressed in young panicles.

It is found in the nucleus. Functionally, trans-acting factor that binds specifically to the consensus nucleotide sequence 5'-TNCGTACAA-3'. May be involved in panicle development. The chain is Squamosa promoter-binding-like protein 16 (SPL16) from Oryza sativa subsp. japonica (Rice).